A 27-amino-acid polypeptide reads, in one-letter code: Conotoxin flf14b (27 aa).

Disulfide bonds link cysteine 6-cysteine 26 and cysteine 10-cysteine 22.

Expressed by the venom duct.

The protein localises to the secreted. This is Conotoxin flf14b from Conus anabathrum floridanus (Florida cone).